We begin with the raw amino-acid sequence, 189 residues long: MASKRALVILAKGAEEMETVIPVDIMRRAGIKVTVAGLAGKDPVQCSRDVMICPDTSLEDAKKQGPYDVVVLPGGNLGAQNLSESPVVKEILKEQESRKGLIAAICAGPTALLAHEIGFGSKVTTHPGAKDKMMNGSHYSYSESRVEKDGLILTSRGPGTSFEFALAIVEALSGKEAADQVKAPLVLKD.

N-acetylalanine; in Protein/nucleic acid deglycase DJ-1, N-terminally processed is present on alanine 2. Residues cysteine 46 and cysteine 53 are each lipidated (S-palmitoyl cysteine). Tyrosine 67 bears the Phosphotyrosine mark. Catalysis depends on cysteine 106, which acts as the Nucleophile. Cysteine 106 is subject to Cysteine sulfinic acid (-SO2H); alternate. A lipid anchor (S-palmitoyl cysteine; alternate) is attached at cysteine 106. The active site involves histidine 126. Lysine 130 participates in a covalent cross-link: Glycyl lysine isopeptide (Lys-Gly) (interchain with G-Cter in SUMO). N6-acetyllysine is present on lysine 148. At lysine 182 the chain carries N6-succinyllysine.

It belongs to the peptidase C56 family. Homodimer. Binds EFCAB6/DJBP and PIAS2. Part of a ternary complex containing PARK7, EFCAB6/DJBP and AR. Interacts (via N-terminus) with OTUD7B. Interacts with BBS1, HIPK1, CLCF1 and MTERF. Forms a complex with PINK1 and PRKN. Interacts (via C-terminus) with NCF1; the interaction is enhanced by LPS and modulates NCF1 phosphorylation and membrane translocation. Interacts with NENF. Deglycase activity does not require glutathione as a cofactor, however, glycated glutathione constitutes a PARK7 substrate. serves as cofactor. Post-translationally, sumoylated on Lys-130 by PIAS2 or PIAS4; which is essential for cell-growth promoting activity and transforming activity. In terms of processing, undergoes cleavage of a C-terminal peptide and subsequent activation of protease activity in response to oxidative stress. In terms of tissue distribution, detected in liver, heart, spleen and testis (at protein level). Detected in liver, heart, spleen, kidney, epididymidis, vas deferens, sperm cells and testis.

Its subcellular location is the cell membrane. The protein resides in the cytoplasm. It is found in the nucleus. The protein localises to the membrane raft. It localises to the mitochondrion. Its subcellular location is the endoplasmic reticulum. It carries out the reaction N(omega)-(1-hydroxy-2-oxopropyl)-L-arginyl-[protein] + H2O = lactate + L-arginyl-[protein] + H(+). It catalyses the reaction N(6)-(1-hydroxy-2-oxopropyl)-L-lysyl-[protein] + H2O = lactate + L-lysyl-[protein] + H(+). The catalysed reaction is S-(1-hydroxy-2-oxopropyl)-L-cysteinyl-[protein] + H2O = lactate + L-cysteinyl-[protein] + H(+). The enzyme catalyses N(omega)-(1-hydroxy-2-oxoethyl)-L-arginyl-[protein] + H2O = L-arginyl-[protein] + glycolate + H(+). It carries out the reaction N(6)-(1-hydroxy-2-oxoethyl)-L-lysyl-[protein] + H2O = glycolate + L-lysyl-[protein] + H(+). It catalyses the reaction S-(1-hydroxy-2-oxoethyl)-L-cysteinyl-[protein] + H2O = glycolate + L-cysteinyl-[protein] + H(+). The catalysed reaction is N(2)-(1-hydroxy-2-oxopropyl)-dGTP + H2O = lactate + dGTP + H(+). The enzyme catalyses N(2)-(1-hydroxy-2-oxopropyl)-GTP + H2O = lactate + GTP + H(+). It carries out the reaction N(2)-(1-hydroxy-2-oxopropyl)-GDP + H2O = lactate + GDP + H(+). It catalyses the reaction N(2)-(1-hydroxy-2-oxopropyl)-GMP + H2O = lactate + GMP + H(+). The catalysed reaction is N(2)-(1-hydroxy-2-oxoethyl)-dGTP + H2O = dGTP + glycolate + H(+). The enzyme catalyses N(2)-(1-hydroxy-2-oxoethyl)-GTP + H2O = glycolate + GTP + H(+). It carries out the reaction N(2)-(1-hydroxy-2-oxoethyl)-GDP + H2O = glycolate + GDP + H(+). It catalyses the reaction N(2)-(1-hydroxy-2-oxoethyl)-GMP + H2O = glycolate + GMP + H(+). The catalysed reaction is an N(2)-(1-hydroxy-2-oxopropyl)-guanosine in RNA + H2O = a guanosine in RNA + lactate + H(+). The enzyme catalyses an N(2)-(1-hydroxy-2-oxopropyl)-2'-deoxyguanosine in DNA + H2O = a 2'-deoxyguanosine in DNA + lactate + H(+). It carries out the reaction an N(2)-(1-hydroxy-2-oxoethyl)-guanosine in RNA + H2O = a guanosine in RNA + glycolate + H(+). It catalyses the reaction an N(2)-(1-hydroxy-2-oxoethyl)-2'-deoxyguanosine in DNA + H2O = a 2'-deoxyguanosine in DNA + glycolate + H(+). Functionally, multifunctional protein with controversial molecular function which plays an important role in cell protection against oxidative stress and cell death acting as oxidative stress sensor and redox-sensitive chaperone and protease. It is involved in neuroprotective mechanisms like the stabilization of NFE2L2 and PINK1 proteins, male fertility as a positive regulator of androgen signaling pathway as well as cell growth and transformation through, for instance, the modulation of NF-kappa-B signaling pathway. Has been described as a protein and nucleotide deglycase that catalyzes the deglycation of the Maillard adducts formed between amino groups of proteins or nucleotides and reactive carbonyl groups of glyoxals. But this function is rebuted by other works. As a protein deglycase, repairs methylglyoxal- and glyoxal-glycated proteins, and releases repaired proteins and lactate or glycolate, respectively. Deglycates cysteine, arginine and lysine residues in proteins, and thus reactivates these proteins by reversing glycation by glyoxals. Acts on early glycation intermediates (hemithioacetals and aminocarbinols), preventing the formation of advanced glycation endproducts (AGE) that cause irreversible damage. Also functions as a nucleotide deglycase able to repair glycated guanine in the free nucleotide pool (GTP, GDP, GMP, dGTP) and in DNA and RNA. Is thus involved in a major nucleotide repair system named guanine glycation repair (GG repair), dedicated to reversing methylglyoxal and glyoxal damage via nucleotide sanitization and direct nucleic acid repair. Protects histones from adduction by methylglyoxal, controls the levels of methylglyoxal-derived argininine modifications on chromatin. Able to remove the glycations and restore histone 3, histone glycation disrupts both local and global chromatin architecture by altering histone-DNA interactions as well as histone acetylation and ubiquitination levels. Displays a very low glyoxalase activity that may reflect its deglycase activity. Eliminates hydrogen peroxide and protects cells against hydrogen peroxide-induced cell death. Required for correct mitochondrial morphology and function as well as for autophagy of dysfunctional mitochondria. Plays a role in regulating expression or stability of the mitochondrial uncoupling proteins SLC25A14 and SLC25A27 in dopaminergic neurons of the substantia nigra pars compacta and attenuates the oxidative stress induced by calcium entry into the neurons via L-type channels during pacemaking. Regulates astrocyte inflammatory responses, may modulate lipid rafts-dependent endocytosis in astrocytes and neuronal cells. In pancreatic islets, involved in the maintenance of mitochondrial reactive oxygen species (ROS) levels and glucose homeostasis in an age- and diet dependent manner. Protects pancreatic beta cells from cell death induced by inflammatory and cytotoxic setting. Binds to a number of mRNAs containing multiple copies of GG or CC motifs and partially inhibits their translation but dissociates following oxidative stress. Metal-binding protein able to bind copper as well as toxic mercury ions, enhances the cell protection mechanism against induced metal toxicity. In macrophages, interacts with the NADPH oxidase subunit NCF1 to direct NADPH oxidase-dependent ROS production, and protects against sepsis. The chain is Parkinson disease protein 7 homolog (PARK7) from Mesocricetus auratus (Golden hamster).